The sequence spans 482 residues: Glutamate--tRNA ligase (482 aa).

Positions 9-19 (PSPTGYLHIGG) match the 'HIGH' region motif. Residues 252 to 256 (KLSKR) carry the 'KMSKS' region motif. An ATP-binding site is contributed by Lys-255.

This sequence belongs to the class-I aminoacyl-tRNA synthetase family. Glutamate--tRNA ligase type 1 subfamily. In terms of assembly, monomer.

It is found in the cytoplasm. The catalysed reaction is tRNA(Glu) + L-glutamate + ATP = L-glutamyl-tRNA(Glu) + AMP + diphosphate. In terms of biological role, catalyzes the attachment of glutamate to tRNA(Glu) in a two-step reaction: glutamate is first activated by ATP to form Glu-AMP and then transferred to the acceptor end of tRNA(Glu). This is Glutamate--tRNA ligase from Ureaplasma parvum serovar 3 (strain ATCC 27815 / 27 / NCTC 11736).